Consider the following 20-residue polypeptide: Antifreeze protein (20 aa).

N-glycosylated and O-glycosylated.

Its subcellular location is the secreted. It localises to the extracellular space. Functionally, antifreeze proteins bind to the surface of ice crystals and inhibit the growth of these crystals, this inhibition causes thermal hysteresis. Causes the shape of ice crystals to change from hexagonal to a bipyramidal shape with rugged facets. Inhibits recrystallization of ice crystals. This Antarctomyces psychrotrophicus protein is Antifreeze protein.